Here is a 483-residue protein sequence, read N- to C-terminus: Altronate oxidoreductase (483 aa).

18 to 29 lines the NAD(+) pocket; sequence IIQFGEGNFLRA.

The protein belongs to the mannitol dehydrogenase family. UxaB subfamily.

The enzyme catalyses D-altronate + NAD(+) = keto-D-tagaturonate + NADH + H(+). The protein operates within carbohydrate metabolism; pentose and glucuronate interconversion. The polypeptide is Altronate oxidoreductase (Enterobacter sp. (strain 638)).